The chain runs to 611 residues: Lanthanide-dependent methanol dehydrogenase (611 aa).

A signal peptide spans 1–34 (MTVKLKKPKKYAVAKNATLLAAFGLIGSLSLAKA). Cysteine 138 and cysteine 139 form a disulfide bridge. 5 residues coordinate pyrroloquinoline quinone: arginine 144, threonine 188, serine 203, glycine 204, and glycine 205. Glutamate 206 lines the Ce(3+) pocket. Glutamate 206 contacts Eu(3+). Positions 270 and 272 each coordinate pyrroloquinoline quinone. Residues asparagine 290, aspartate 333, and aspartate 335 each coordinate Ce(3+). Eu(3+) is bound by residues asparagine 290, aspartate 333, and aspartate 335. Residue arginine 360 participates in pyrroloquinoline quinone binding. A disulfide bridge links cysteine 414 with cysteine 443. Residues tryptophan 501 and tryptophan 566 each contribute to the pyrroloquinoline quinone site.

This sequence belongs to the bacterial PQQ dehydrogenase family. In terms of assembly, homodimer. It depends on Ce(3+) as a cofactor. La(3+) serves as cofactor. The cofactor is Nd(3+). Requires Pr(3+) as cofactor. Eu(3+) is required as a cofactor. It depends on pyrroloquinoline quinone as a cofactor.

The protein resides in the periplasm. The catalysed reaction is 2 Fe(III)-[cytochrome cL] + methanol = 2 Fe(II)-[cytochrome cL] + formaldehyde + 2 H(+). It catalyses the reaction 4 Fe(III)-[cytochrome cL] + methanol + H2O = 4 Fe(II)-[cytochrome cL] + formate + 5 H(+). It carries out the reaction 2 Fe(III)-[cytochrome cL] + a primary alcohol = 2 Fe(II)-[cytochrome cL] + an aldehyde + 2 H(+). Its pathway is one-carbon metabolism; methanol degradation. Catalyzes the oxidation of methanol to formaldehyde or formate in the presence of lanthanides (Ln). Is a key enzyme in methane/methanol metabolism, allowing M.fumariolicum to grow on methane as the sole carbon and energy source. Can also act on other primary alcohols in vitro, such as ethanol, 1-propanol, 1-butanol, and 1-hexanol, but is not able to oxidize secondary alcohols and acetaldehyde. Uses a specific cytochrome cL, encoded by the adjacent gene in the locus, as electron acceptor. The protein is Lanthanide-dependent methanol dehydrogenase of Methylacidiphilum fumariolicum (strain SolV).